The following is a 101-amino-acid chain: Small ribosomal subunit protein uS14 (101 aa).

Belongs to the universal ribosomal protein uS14 family. In terms of assembly, part of the 30S ribosomal subunit. Contacts proteins S3 and S10.

In terms of biological role, binds 16S rRNA, required for the assembly of 30S particles and may also be responsible for determining the conformation of the 16S rRNA at the A site. This is Small ribosomal subunit protein uS14 from Aeromonas salmonicida (strain A449).